A 209-amino-acid chain; its full sequence is Inorganic pyrophosphatase (209 aa).

Residues Lys38, Arg52, and Tyr64 each contribute to the substrate site. Mg(2+) contacts are provided by Asp92, Asp97, and Asp130. Tyr167 is a binding site for substrate.

Belongs to the PPase family. As to quaternary structure, homohexamer. It depends on Mg(2+) as a cofactor.

Its subcellular location is the cytoplasm. It catalyses the reaction diphosphate + H2O = 2 phosphate + H(+). Functionally, catalyzes the hydrolysis of inorganic pyrophosphate (PPi) forming two phosphate ions. This is Inorganic pyrophosphatase from Chlamydia trachomatis serovar L2 (strain ATCC VR-902B / DSM 19102 / 434/Bu).